Here is a 271-residue protein sequence, read N- to C-terminus: Undecaprenyl-diphosphatase (271 aa).

The next 8 helical transmembrane spans lie at 2–22 (LLIL…FVPV), 42–62 (ANLF…VVYW), 80–100 (LRFW…GFSL), 108–128 (LFNP…MIIV), 149–168 (SIFV…SRSA), 175–195 (WIAG…AIPV), 214–234 (IEFI…LVVI), and 248–268 (IFAI…IFKI).

It belongs to the UppP family.

The protein resides in the cell membrane. It carries out the reaction di-trans,octa-cis-undecaprenyl diphosphate + H2O = di-trans,octa-cis-undecaprenyl phosphate + phosphate + H(+). In terms of biological role, catalyzes the dephosphorylation of undecaprenyl diphosphate (UPP). Confers resistance to bacitracin. The sequence is that of Undecaprenyl-diphosphatase from Clostridium tetani (strain Massachusetts / E88).